The sequence spans 288 residues: Homoserine kinase (288 aa).

79-89 (PPARGLGSSSA) lines the ATP pocket.

It belongs to the GHMP kinase family. Homoserine kinase subfamily.

The protein localises to the cytoplasm. The catalysed reaction is L-homoserine + ATP = O-phospho-L-homoserine + ADP + H(+). The protein operates within amino-acid biosynthesis; L-threonine biosynthesis; L-threonine from L-aspartate: step 4/5. Functionally, catalyzes the ATP-dependent phosphorylation of L-homoserine to L-homoserine phosphate. The chain is Homoserine kinase from Listeria monocytogenes serovar 1/2a (strain ATCC BAA-679 / EGD-e).